Reading from the N-terminus, the 643-residue chain is Probable potassium transport system protein Kup (643 aa).

Basic and acidic residues predominate over residues M1–I12. The interval M1–H20 is disordered. A run of 12 helical transmembrane segments spans residues L28–L48, A65–L85, W121–T141, P158–F178, G187–I207, G224–L244, W268–L288, L301–A321, I358–F378, L384–Y404, P415–A435, and L440–T460.

This sequence belongs to the HAK/KUP transporter (TC 2.A.72) family.

Its subcellular location is the cell inner membrane. The catalysed reaction is K(+)(in) + H(+)(in) = K(+)(out) + H(+)(out). Functionally, transport of potassium into the cell. Likely operates as a K(+):H(+) symporter. The chain is Probable potassium transport system protein Kup from Chlorobium luteolum (strain DSM 273 / BCRC 81028 / 2530) (Pelodictyon luteolum).